The primary structure comprises 459 residues: Argininosuccinate lyase (459 aa).

The protein belongs to the lyase 1 family. Argininosuccinate lyase subfamily.

It localises to the cytoplasm. It carries out the reaction 2-(N(omega)-L-arginino)succinate = fumarate + L-arginine. It participates in amino-acid biosynthesis; L-arginine biosynthesis; L-arginine from L-ornithine and carbamoyl phosphate: step 3/3. The polypeptide is Argininosuccinate lyase (Chromobacterium violaceum (strain ATCC 12472 / DSM 30191 / JCM 1249 / CCUG 213 / NBRC 12614 / NCIMB 9131 / NCTC 9757 / MK)).